A 256-amino-acid polypeptide reads, in one-letter code: Imidazole glycerol phosphate synthase subunit HisF (256 aa).

Catalysis depends on residues D12 and D131.

The protein belongs to the HisA/HisF family. In terms of assembly, heterodimer of HisH and HisF.

It localises to the cytoplasm. The enzyme catalyses 5-[(5-phospho-1-deoxy-D-ribulos-1-ylimino)methylamino]-1-(5-phospho-beta-D-ribosyl)imidazole-4-carboxamide + L-glutamine = D-erythro-1-(imidazol-4-yl)glycerol 3-phosphate + 5-amino-1-(5-phospho-beta-D-ribosyl)imidazole-4-carboxamide + L-glutamate + H(+). It functions in the pathway amino-acid biosynthesis; L-histidine biosynthesis; L-histidine from 5-phospho-alpha-D-ribose 1-diphosphate: step 5/9. In terms of biological role, IGPS catalyzes the conversion of PRFAR and glutamine to IGP, AICAR and glutamate. The HisF subunit catalyzes the cyclization activity that produces IGP and AICAR from PRFAR using the ammonia provided by the HisH subunit. The sequence is that of Imidazole glycerol phosphate synthase subunit HisF from Pseudomonas paraeruginosa (strain DSM 24068 / PA7) (Pseudomonas aeruginosa (strain PA7)).